The chain runs to 172 residues: Photosystem I assembly protein Ycf3 (172 aa).

TPR repeat units follow at residues 35 to 70 (AFTY…EIDP), 74 to 107 (SYIL…NPFL), and 122 to 155 (GERA…TPGN).

Belongs to the Ycf3 family.

It localises to the plastid. The protein resides in the chloroplast thylakoid membrane. In terms of biological role, essential for the assembly of the photosystem I (PSI) complex. May act as a chaperone-like factor to guide the assembly of the PSI subunits. This Dioscorea elephantipes (Elephant's foot yam) protein is Photosystem I assembly protein Ycf3.